The following is a 194-amino-acid chain: CASP-like protein 2C2 (194 aa).

Residues 1–27 (MAAGQPRPPPPPSSVRTERVLRAACAA) are Cytoplasmic-facing. The helical transmembrane segment at 28 to 48 (MAAAGALLLGFSAETKTVIFV) threads the bilayer. Residues 49-58 (QKKAVPKDVQ) lie on the Extracellular side of the membrane. The chain crosses the membrane as a helical span at residues 59-79 (ALWVLIVAAAAAAAYHAAQLA). Residues 80 to 113 (RCLCMDRLAGGGGGCRRLRRAVACATFLLDKGCA) are Cytoplasmic-facing. A helical transmembrane segment spans residues 114-134 (YMVLATTVAALQACFVGLLGV). Residues 135–152 (EALQWSKLCNIYTRFCEQ) are Extracellular-facing. The helical transmembrane segment at 153-173 (AAAGMVCSLVAAAGMAVLSAF) threads the bilayer. The Cytoplasmic portion of the chain corresponds to 174 to 194 (SARDLFRRRRPCSPCVQVQQV).

This sequence belongs to the Casparian strip membrane proteins (CASP) family. In terms of assembly, homodimer and heterodimers.

Its subcellular location is the cell membrane. In Sorghum bicolor (Sorghum), this protein is CASP-like protein 2C2.